Consider the following 466-residue polypeptide: GTP cyclohydrolase 1 (466 aa).

Zn(2+) contacts are provided by Cys-342, His-345, and Cys-416.

Belongs to the GTP cyclohydrolase I family. Homodimer.

It carries out the reaction GTP + H2O = 7,8-dihydroneopterin 3'-triphosphate + formate + H(+). Its pathway is cofactor biosynthesis; 7,8-dihydroneopterin triphosphate biosynthesis; 7,8-dihydroneopterin triphosphate from GTP: step 1/1. Functionally, GTP cyclohydrolase 1 is the first enzyme in the biosynthetic pathway leading to folic acid. This Arabidopsis thaliana (Mouse-ear cress) protein is GTP cyclohydrolase 1 (GCH1).